We begin with the raw amino-acid sequence, 140 residues long: Probable glycine cleavage system H protein 3 (140 aa).

A Lipoyl-binding domain is found at 29–110 (VVSIGVTDLG…PYDSWIVKIR (82 aa)). Residue K70 is modified to N6-lipoyllysine.

Belongs to the GcvH family. In terms of assembly, the glycine cleavage system is composed of four proteins: P, T, L and H. Requires (R)-lipoate as cofactor.

Its function is as follows. The glycine cleavage system catalyzes the degradation of glycine. The H protein shuttles the methylamine group of glycine from the P protein to the T protein. The chain is Probable glycine cleavage system H protein 3 from Saccharolobus solfataricus (strain ATCC 35092 / DSM 1617 / JCM 11322 / P2) (Sulfolobus solfataricus).